Here is a 103-residue protein sequence, read N- to C-terminus: Putative double-stranded DNA mimic protein HAPS_1002 (103 aa).

It belongs to the putative dsDNA mimic protein family.

Its function is as follows. May act as a double-stranded DNA (dsDNA) mimic. Probably regulates the activity of a dsDNA-binding protein. The sequence is that of Putative double-stranded DNA mimic protein HAPS_1002 from Glaesserella parasuis serovar 5 (strain SH0165) (Haemophilus parasuis).